The following is a 292-amino-acid chain: NAD kinase (292 aa).

The Proton acceptor role is filled by Asp73. NAD(+) contacts are provided by residues 73–74, 147–148, His158, Arg175, Asp177, 188–193, and Gln247; these read DG, NE, and TAYSLS.

This sequence belongs to the NAD kinase family. Requires a divalent metal cation as cofactor.

The protein localises to the cytoplasm. It carries out the reaction NAD(+) + ATP = ADP + NADP(+) + H(+). Its function is as follows. Involved in the regulation of the intracellular balance of NAD and NADP, and is a key enzyme in the biosynthesis of NADP. Catalyzes specifically the phosphorylation on 2'-hydroxyl of the adenosine moiety of NAD to yield NADP. The protein is NAD kinase of Shigella dysenteriae serotype 1 (strain Sd197).